Reading from the N-terminus, the 350-residue chain is Dihydroorotate dehydrogenase (quinone) (350 aa).

FMN is bound by residues 65–69 and Thr89; that span reads AGLDK. Lys69 serves as a coordination point for substrate. 114–118 contributes to the substrate binding site; it reads NRLGF. Residues Asn149 and Asn182 each contribute to the FMN site. Asn182 provides a ligand contact to substrate. Ser185 acts as the Nucleophile in catalysis. Asn187 contributes to the substrate binding site. Positions 227 and 255 each coordinate FMN. 256–257 provides a ligand contact to substrate; the sequence is NT. Residues Gly278, Gly307, and 328-329 each bind FMN; that span reads YT.

The protein belongs to the dihydroorotate dehydrogenase family. Type 2 subfamily. As to quaternary structure, monomer. Requires FMN as cofactor.

Its subcellular location is the cell membrane. It carries out the reaction (S)-dihydroorotate + a quinone = orotate + a quinol. The protein operates within pyrimidine metabolism; UMP biosynthesis via de novo pathway; orotate from (S)-dihydroorotate (quinone route): step 1/1. Its function is as follows. Catalyzes the conversion of dihydroorotate to orotate with quinone as electron acceptor. This Polaromonas naphthalenivorans (strain CJ2) protein is Dihydroorotate dehydrogenase (quinone).